We begin with the raw amino-acid sequence, 277 residues long: Phosphonoacetaldehyde hydrolase (277 aa).

Residue Asp20 is the Nucleophile of the active site. Residues Asp20 and Ala22 each coordinate Mg(2+). Lys61 acts as the Schiff-base intermediate with substrate in catalysis. Residue Asp194 participates in Mg(2+) binding.

It belongs to the HAD-like hydrolase superfamily. PhnX family. As to quaternary structure, homodimer. The cofactor is Mg(2+).

It carries out the reaction phosphonoacetaldehyde + H2O = acetaldehyde + phosphate + H(+). Involved in phosphonate degradation. The chain is Phosphonoacetaldehyde hydrolase from Syntrophobacter fumaroxidans (strain DSM 10017 / MPOB).